A 644-amino-acid polypeptide reads, in one-letter code: Threonine--tRNA ligase (644 aa).

The region spanning methionine 1–threonine 61 is the TGS domain. Residues aspartate 243 to proline 536 form a catalytic region. Residues cysteine 336, histidine 387, and histidine 513 each coordinate Zn(2+).

Belongs to the class-II aminoacyl-tRNA synthetase family. As to quaternary structure, homodimer. Zn(2+) is required as a cofactor.

The protein resides in the cytoplasm. It catalyses the reaction tRNA(Thr) + L-threonine + ATP = L-threonyl-tRNA(Thr) + AMP + diphosphate + H(+). Functionally, catalyzes the attachment of threonine to tRNA(Thr) in a two-step reaction: L-threonine is first activated by ATP to form Thr-AMP and then transferred to the acceptor end of tRNA(Thr). Also edits incorrectly charged L-seryl-tRNA(Thr). In Maricaulis maris (strain MCS10) (Caulobacter maris), this protein is Threonine--tRNA ligase.